The chain runs to 250 residues: Sperm-egg fusion protein Juno (250 aa).

The signal sequence occupies residues 1–19 (MACWWPLLLELWTVMPTWA). 8 disulfide bridges follow: C27/C55, C47/C95, C56/C99, C79/C172, C86/C143, C132/C206, C136/C186, and C149/C166. An important for interaction with IZUMO1 region spans residues 62–81 (WEAHLDVSPLYNFSLFHCGL). N73 is a glycosylation site (N-linked (GlcNAc...) asparagine). S228 carries the GPI-anchor amidated serine lipid modification. The propeptide occupies 229–250 (SAPSWELSYTIMVCSLFLPFLS).

This sequence belongs to the folate receptor family. As to quaternary structure, monomer. Interacts with IZUMO1; the interaction is direct. IZUMO1 and IZUMO1R/JUNO form a complex with 1:1 stoichiometry. Interacts with FCRL3/MAIA; FCRL3/MAIA replaces IZUMO1R/JUNO as IZUMO1 receptor after sperm-egg adhesion, thereby permitting species-specific gamete fusion. Interacts with WDR54. Post-translationally, the protein is rapidly cleaved following fertilization, being only weakly detectable in zona-intact fertilized eggs at telophase II and undetectable at the pronuclear stage. Sheding is probably required to block to polyspermy and ensuring egg fusion with a single sperm. As to expression, expressed in unfertilized oocytes (at protein level).

Its subcellular location is the cell membrane. It localises to the cell projection. The protein localises to the microvillus membrane. Its function is as follows. Receptor for IZUMO1 present at the cell surface of oocytes (oolemma), which is essential for species-specific gamete recognition and fertilization. The IZUMO1:IZUMO1R/JUNO interaction is a necessary adhesion event between sperm and egg that is required for fertilization but is not sufficient for cell fusion. The ligand-receptor interaction probably does not act as a membrane 'fusogen'. Does not bind folate. In Homo sapiens (Human), this protein is Sperm-egg fusion protein Juno.